Reading from the N-terminus, the 460-residue chain is 3-ketoacyl-CoA synthase 7 (460 aa).

Residues 21–41 (FHQFLVASACVLIAVFGYYFF) form a helical membrane-spanning segment. The region spanning 38 to 328 (YYFFKPRCII…YIISFIQRKW (291 aa)) is the FAE domain. Active-site residues include Cys183, His262, His345, His349, and Asn382.

It belongs to the thiolase-like superfamily. Chalcone/stilbene synthases family. As to expression, expressed in flowers.

The protein resides in the membrane. The enzyme catalyses a very-long-chain acyl-CoA + malonyl-CoA + H(+) = a very-long-chain 3-oxoacyl-CoA + CO2 + CoA. It participates in lipid metabolism; fatty acid biosynthesis. This Arabidopsis thaliana (Mouse-ear cress) protein is 3-ketoacyl-CoA synthase 7.